Here is a 143-residue protein sequence, read N- to C-terminus: Glutamate-rich protein 4 (143 aa).

Over residues 90–106 (LEEEEEDDDEEEQEEEG) the composition is skewed to acidic residues. Residues 90–143 (LEEEEEDDDEEEQEEEGEGKNCVEENKGLQGKQGEKCSGNPYPAQRLPDFEMTI) form a disordered region. The segment covering 107-116 (EGKNCVEENK) has biased composition (basic and acidic residues).

The polypeptide is Glutamate-rich protein 4 (Erich4) (Rattus norvegicus (Rat)).